Here is a 291-residue protein sequence, read N- to C-terminus: 2-C-methyl-D-erythritol 4-phosphate cytidylyltransferase (291 aa).

The segment at 1–23 (MTERDFDTPVETPTVQPAPAQGA) is disordered.

Belongs to the IspD/TarI cytidylyltransferase family. IspD subfamily.

It carries out the reaction 2-C-methyl-D-erythritol 4-phosphate + CTP + H(+) = 4-CDP-2-C-methyl-D-erythritol + diphosphate. It participates in isoprenoid biosynthesis; isopentenyl diphosphate biosynthesis via DXP pathway; isopentenyl diphosphate from 1-deoxy-D-xylulose 5-phosphate: step 2/6. Functionally, catalyzes the formation of 4-diphosphocytidyl-2-C-methyl-D-erythritol from CTP and 2-C-methyl-D-erythritol 4-phosphate (MEP). This is 2-C-methyl-D-erythritol 4-phosphate cytidylyltransferase from Bifidobacterium longum (strain NCC 2705).